A 239-amino-acid polypeptide reads, in one-letter code: Cysteine-rich venom protein ENH1 (239 aa).

The signal sequence occupies residues Met1 to Ala18. The SCP domain maps to Val37–Tyr165. Cystine bridges form between Cys74-Cys152, Cys91-Cys166, Cys147-Cys163, Cys185-Cys192, Cys188-Cys197, Cys210-Cys228, and Cys219-Cys232. The ShKT domain occupies Cys201–Cys234.

Belongs to the CRISP family. As to expression, expressed by the venom gland.

It is found in the secreted. Its function is as follows. Blocks contraction of smooth muscle elicited by high potassium-induced depolarization, but does not block caffeine-stimulated contraction. May target voltage-gated calcium channels on smooth muscle. This Pseudoferania polylepis (Macleay's water snake) protein is Cysteine-rich venom protein ENH1.